A 285-amino-acid chain; its full sequence is Polyamine aminopropyltransferase (285 aa).

Residues 5 to 241 (DNWYIEHFQP…GWWSVTMASK (237 aa)) form the PABS domain. An S-methyl-5'-thioadenosine-binding site is contributed by Gln-35. Residues His-66 and Asp-90 each contribute to the spermidine site. S-methyl-5'-thioadenosine-binding positions include Asp-110 and 141–142 (DG). Asp-160 serves as the catalytic Proton acceptor. 160–163 (DSTD) serves as a coordination point for spermidine. Pro-167 is a binding site for S-methyl-5'-thioadenosine.

The protein belongs to the spermidine/spermine synthase family. In terms of assembly, homodimer or homotetramer.

It is found in the cytoplasm. The enzyme catalyses S-adenosyl 3-(methylsulfanyl)propylamine + putrescine = S-methyl-5'-thioadenosine + spermidine + H(+). It functions in the pathway amine and polyamine biosynthesis; spermidine biosynthesis; spermidine from putrescine: step 1/1. In terms of biological role, catalyzes the irreversible transfer of a propylamine group from the amino donor S-adenosylmethioninamine (decarboxy-AdoMet) to putrescine (1,4-diaminobutane) to yield spermidine. In Xanthomonas euvesicatoria pv. vesicatoria (strain 85-10) (Xanthomonas campestris pv. vesicatoria), this protein is Polyamine aminopropyltransferase.